Consider the following 163-residue polypeptide: Phosphopantetheine adenylyltransferase (163 aa).

Ser10 lines the substrate pocket. ATP-binding positions include 10-11 and His18; that span reads SF. The substrate site is built by Lys42, Leu74, and Arg88. ATP is bound by residues 89 to 91, Glu99, and 124 to 130; these read GLR and YSFLSSS.

Belongs to the bacterial CoaD family. As to quaternary structure, homohexamer. Requires Mg(2+) as cofactor.

It localises to the cytoplasm. It catalyses the reaction (R)-4'-phosphopantetheine + ATP + H(+) = 3'-dephospho-CoA + diphosphate. The protein operates within cofactor biosynthesis; coenzyme A biosynthesis; CoA from (R)-pantothenate: step 4/5. Functionally, reversibly transfers an adenylyl group from ATP to 4'-phosphopantetheine, yielding dephospho-CoA (dPCoA) and pyrophosphate. The sequence is that of Phosphopantetheine adenylyltransferase from Bacillus cereus (strain G9842).